The chain runs to 129 residues: Small ribosomal subunit protein uS11 (129 aa).

It belongs to the universal ribosomal protein uS11 family. In terms of assembly, part of the 30S ribosomal subunit. Interacts with proteins S7 and S18. Binds to IF-3.

In terms of biological role, located on the platform of the 30S subunit, it bridges several disparate RNA helices of the 16S rRNA. Forms part of the Shine-Dalgarno cleft in the 70S ribosome. This Pseudomonas fluorescens (strain SBW25) protein is Small ribosomal subunit protein uS11.